Reading from the N-terminus, the 144-residue chain is Large ribosomal subunit protein uL15 (144 aa).

The segment at 1 to 25 (MFLNTIGARDGSRPEKKRVGRGIGS) is disordered.

Belongs to the universal ribosomal protein uL15 family. Part of the 50S ribosomal subunit.

Its function is as follows. Binds to the 23S rRNA. This is Large ribosomal subunit protein uL15 from Methylococcus capsulatus (strain ATCC 33009 / NCIMB 11132 / Bath).